Here is a 191-residue protein sequence, read N- to C-terminus: CASP-like protein 2U4 (191 aa).

Residues 1 to 25 (MGAYDGAEAPRAAPASTAANSRPSR) are Cytoplasmic-facing. Residues 26–46 (LLLLHSLLLRLVAVVLSILVI) traverse the membrane as a helical segment. At 47 to 68 (AVMVHAKQRVMIFKAEWDNSKA) the chain is on the extracellular side. The helical transmembrane segment at 69 to 89 (FVALVTISAICLGYSFLQFIL) threads the bilayer. Residues 90-114 (SAFHLCSKSWKSPTKCWAWMNFIAD) are Cytoplasmic-facing. A helical transmembrane segment spans residues 115-135 (QILTYAMLGAAAAAAELAYIA). At 136 to 157 (KNGSSRAQWQPICSTFNTFCTR) the chain is on the extracellular side. A glycan (N-linked (GlcNAc...) asparagine) is linked at N137. Residues 158–178 (AGASIILSFIAVLALANSSAI) traverse the membrane as a helical segment. Residues 179-191 (SAYHLFRRPSSSV) are Cytoplasmic-facing.

It belongs to the Casparian strip membrane proteins (CASP) family. In terms of assembly, homodimer and heterodimers.

The protein localises to the cell membrane. This is CASP-like protein 2U4 from Selaginella moellendorffii (Spikemoss).